Consider the following 107-residue polypeptide: Putative double-stranded DNA mimic protein ECA2319 (107 aa).

The protein belongs to the putative dsDNA mimic protein family.

May act as a double-stranded DNA (dsDNA) mimic. Probably regulates the activity of a dsDNA-binding protein. This is Putative double-stranded DNA mimic protein ECA2319 from Pectobacterium atrosepticum (strain SCRI 1043 / ATCC BAA-672) (Erwinia carotovora subsp. atroseptica).